The following is a 242-amino-acid chain: Galectin-3 (242 aa).

The tract at residues 1-35 is disordered; the sequence is MADGFSLNDALSGSGHPPNQGWPGPWGNQPAGPGG. Residue Ala2 is modified to N-acetylalanine. At Ser6 the chain carries Phosphoserine; by CK1. Ser12 is modified (phosphoserine). Low complexity predominate over residues 17–31; the sequence is PPNQGWPGPWGNQPA. 4 tandem repeats follow at residues 35–43, 44–52, 53–61, and 62–70. The segment at 35-98 is 7 X 9 AA tandem repeats of Y-P-G-X(3)-P-[GS]-A; that stretch reads GYPGAAYPGA…GAGAYPGASP (64 aa). A disordered region spans residues 55 to 93; the sequence is GQAPPGPYPGPGAHGAYPGQPGGPGAYPSPGQPSGAGAY. One copy of the 5; approximate repeat lies at 71–80; sequence YPGQPGGPGA. The span at 80–93 shows a compositional bias: low complexity; the sequence is AYPSPGQPSGAGAY. The stretch at 81–92 is one 6; approximate repeat; the sequence is YPSPGQPSGAGA. A 7; truncated repeat occupies 93–98; it reads YPGASP. The region spanning 110–240 is the Galectin domain; the sequence is YDLPLPGGVM…DIQLTSASHA (131 aa). 173–181 contributes to the a beta-D-galactoside binding site; the sequence is WGREERQTT. The Nuclear export signal signature appears at 218-233; the sequence is RNLKEINKLGISGDIQ.

In terms of assembly, probably forms homo- or heterodimers. Interacts with DMBT1. Interacts with CD6 and ALCAM. Forms a complex with the ITGA3, ITGB1 and CSPG4. Interacts with LGALS3BP, LYPD3, ZFTRAF1 and UACA. Interacts with TRIM16; this interaction mediates autophagy of damage endomembranes. Interacts with cargo receptor TMED10; the interaction mediates the translocation from the cytoplasm into the ERGIC (endoplasmic reticulum-Golgi intermediate compartment) and thereby secretion. Interacts with and inhibits by binding NCR3/NKp30.

The protein resides in the cytoplasm. It is found in the nucleus. Its subcellular location is the secreted. Galactose-specific lectin which binds IgE. May mediate with the alpha-3, beta-1 integrin the stimulation by CSPG4 of endothelial cells migration. Together with DMBT1, required for terminal differentiation of columnar epithelial cells during early embryogenesis. In the nucleus: acts as a pre-mRNA splicing factor. Involved in acute inflammatory responses including neutrophil activation and adhesion, chemoattraction of monocytes macrophages, opsonization of apoptotic neutrophils, and activation of mast cells. Together with TRIM16, coordinates the recognition of membrane damage with mobilization of the core autophagy regulators ATG16L1 and BECN1 in response to damaged endomembranes. When secreted, interacts with NK cell-activating receptor NCR3/NKp30 acting as an inhibitory ligand which antagonizes NK cell attack. The chain is Galectin-3 (LGALS3) from Oryctolagus cuniculus (Rabbit).